The primary structure comprises 721 residues: K(+)-insensitive pyrophosphate-energized proton pump (721 aa).

5 helical membrane passes run 8–28 (LLGV…AVWV), 57–77 (YRTL…AIDM), 82–102 (FGLT…AGYL), 136–156 (VMGL…YLVF), and 168–188 (LVAL…GGGI). Lys191 lines the substrate pocket. Mg(2+) contacts are provided by Asp194, Asp198, Asn221, and Asp224. Transmembrane regions (helical) follow at residues 247–267 (AIFL…IILF), 294–314 (ISLA…IGAF), 323–343 (ALAL…IVKI), 374–394 (YGVG…VLGI), and 416–436 (AGIF…GIII). Asp446 contributes to the Mg(2+) binding site. 4 helical membrane-spanning segments follow: residues 483–503 (AIAS…FEIV), 527–547 (LINA…YFFS), 599–619 (FLIP…LLGW), and 621–641 (ALAG…LLMA). 3 residues coordinate Ca(2+): Asp648, Asp672, and Asp676. Lys679 provides a ligand contact to substrate. The chain crosses the membrane as a helical span at residues 698-718 (VVFTYVIVSTNIALGIWPSGL).

The protein belongs to the H(+)-translocating pyrophosphatase (TC 3.A.10) family. K(+)-insensitive subfamily. Homodimer. It depends on Mg(2+) as a cofactor.

Its subcellular location is the cell membrane. It carries out the reaction diphosphate + H2O + H(+)(in) = 2 phosphate + 2 H(+)(out). In terms of biological role, proton pump that utilizes the energy of pyrophosphate hydrolysis as the driving force for proton movement across the membrane. Generates a proton motive force. This chain is K(+)-insensitive pyrophosphate-energized proton pump, found in Pyrobaculum aerophilum (strain ATCC 51768 / DSM 7523 / JCM 9630 / CIP 104966 / NBRC 100827 / IM2).